A 169-amino-acid chain; its full sequence is 3-hydroxyanthranilate 3,4-dioxygenase (169 aa).

Residue Arg44 coordinates O2. Residues His48, Glu54, and His92 each contribute to the Fe cation site. Glu54 is a substrate binding site. The substrate site is built by Arg96 and Glu106. A divalent metal cation-binding residues include Cys121, Cys124, Cys158, and Cys160.

The protein belongs to the 3-HAO family. Requires Fe(2+) as cofactor.

The protein resides in the cytoplasm. It catalyses the reaction 3-hydroxyanthranilate + O2 = (2Z,4Z)-2-amino-3-carboxymuconate 6-semialdehyde. Its pathway is cofactor biosynthesis; NAD(+) biosynthesis; quinolinate from L-kynurenine: step 3/3. Functionally, catalyzes the oxidative ring opening of 3-hydroxyanthranilate to 2-amino-3-carboxymuconate semialdehyde, which spontaneously cyclizes to quinolinate. This Meyerozyma guilliermondii (strain ATCC 6260 / CBS 566 / DSM 6381 / JCM 1539 / NBRC 10279 / NRRL Y-324) (Yeast) protein is 3-hydroxyanthranilate 3,4-dioxygenase.